The primary structure comprises 470 residues: Calcium/manganese antiporter SLC30A10 (470 aa).

Topologically, residues 1 to 10 (MGRYSGKTCR) are cytoplasmic. A helical membrane pass occupies residues 11–31 (LLFMLVLTAAFFVAELVSGYL). Over 32–34 (GNS) the chain is Extracellular. Residues 35-55 (IALLSDSFNMLSDLISLCVGL) traverse the membrane as a helical segment. Residues 56–81 (GSGYIARRGPRGSSATYGYVRAEVVG) are Cytoplasmic-facing. Residues 82–102 (ALSNAVFLTALCFTIFVEAVL) form a helical membrane-spanning segment. Residues 103-113 (RLARPERIDDP) are Extracellular-facing. The chain crosses the membrane as a helical span at residues 114–134 (ELVLIVGALGLAVNVVGLLIF). Residues 135-233 (QDCGACFSRC…KSEALNIRGV (99 aa)) lie on the Cytoplasmic side of the membrane. Residues 146–223 (RGRRTRPSQQ…EPEETTKKEK (78 aa)) form a disordered region. The span at 171–184 (AATATAPGSGTAVT) shows a compositional bias: low complexity. The helical transmembrane segment at 234-254 (LLHVMGDALGSVVVVITAIIF) threads the bilayer. Residues 255-270 (YVQPLRREDPCNWQCY) lie on the Extracellular side of the membrane. A helical transmembrane segment spans residues 271–291 (IDPSLTVVMVIIILSSAFPLI). Topologically, residues 292–470 (KETAVILLQM…RQHYENSTHF (179 aa)) are cytoplasmic. The tract at residues 300 to 470 (QMVPKGVNME…RQHYENSTHF (171 aa)) is required for plasma membrane localization. Positions 451 to 470 (QGQTLSKTQERQHYENSTHF) are disordered. Residues 458–470 (TQERQHYENSTHF) show a composition bias toward basic and acidic residues.

The protein belongs to the cation diffusion facilitator (CDF) transporter (TC 2.A.4) family. SLC30A subfamily. Forms homodimers. Forms heterodimers and high-molecular weight oligomers with SLC30A3, SLC30A2 and SLC30A4; heterodimerization is mediated by covalent-bound tyrosine residues, occurs probably in a tissue-specific manner and could mediate the intracellular zinc transport activity into early endosomes and recycling endosomes. In terms of tissue distribution, specifically expressed in fetal liver and fetal brain.

Its subcellular location is the cell membrane. It is found in the golgi apparatus membrane. The protein localises to the recycling endosome membrane. The protein resides in the early endosome membrane. It carries out the reaction Mn(2+)(out) + Ca(2+)(in) = Mn(2+)(in) + Ca(2+)(out). It catalyses the reaction Zn(2+)(in) = Zn(2+)(out). Calcium:manganese antiporter of the plasma membrane mediating the efflux of intracellular manganese coupled to an active extracellular calcium exchange. Required for intracellular manganese homeostasis, an essential cation for the function of several enzymes, including some crucially important for the metabolism of neurotransmitters and other neuronal metabolic pathways. Manganese can also be cytotoxic and induce oxidative stress, mitochondrial dysfunction and apoptosis. Could also have an intracellular zinc ion transporter activity, directly regulating intracellular zinc ion homeostasis and more indirectly various signaling pathway and biological processes. In Mus musculus (Mouse), this protein is Calcium/manganese antiporter SLC30A10.